We begin with the raw amino-acid sequence, 52 residues long: Phospholamban (52 aa).

M1 bears the N-acetylmethionine mark. Residues 1–31 are Cytoplasmic-facing; sequence MDKVQYLTRSAIRRASTIEMPQQARQNLQNL. Residue S16 is modified to Phosphoserine; by PKA and DMPK. T17 carries the post-translational modification Phosphothreonine; by CaMK2. The chain crosses the membrane as a helical span at residues 32-52; that stretch reads FINFCLILICLLLICIIVMLL. C36 carries the S-palmitoyl cysteine lipid modification.

The protein belongs to the phospholamban family. In terms of assembly, homopentamer. Can also form heterooligomers with other sarcoplasmic/endoplasmic reticulum calcium ATPase (SERCA) regulators ARLN, ERLN, SLN and STRIT1/DWORF. Monomer. Interacts with HAX1. Interacts as a monomer with ATP2A2; the interaction decreases ATP2A2 Ca(2+) affinity. Interacts with VMP1; VMP1 competes with PLN and SLN to prevent them from forming an inhibitory complex with ATP2A2. Interacts with S100A1 in a Ca(2+)-dependent manner. Phosphorylation by DMPK may stimulate sarcoplasmic reticulum calcium uptake in cardiomyocytes. Phosphorylation by PKA abolishes the inhibition of ATP2A2-mediated calcium uptake. Phosphorylated at Thr-17 by CaMK2, and in response to beta-adrenergic stimulation. In terms of processing, palmitoylated by ZDHHC16, promoting formation of the homopentamer. Post-translationally, in elongated spermatids, proteolytically cleaved by SPPL2C which modulates intracellular Ca(2+) homeostasis. As to expression, heart.

The protein localises to the endoplasmic reticulum membrane. The protein resides in the sarcoplasmic reticulum membrane. Its subcellular location is the mitochondrion membrane. It localises to the membrane. In terms of biological role, reversibly inhibits the activity of ATP2A2/SERCA2 in cardiac sarcoplasmic reticulum by decreasing the apparent affinity of the ATPase for Ca(2+). Binds preferentially to the ATP-bound E1 conformational form of ATP2A2 which predominates at low Ca(2+) concentrations during the diastolic phase of the cardiac cycle. Inhibits ATP2A2 Ca(2+) affinity by disrupting its allosteric activation by ATP. Modulates the contractility of the heart muscle in response to physiological stimuli via its effects on ATP2A2. Modulates calcium re-uptake during muscle relaxation and plays an important role in calcium homeostasis in the heart muscle. The degree of ATP2A2 inhibition depends on the oligomeric state of PLN. ATP2A2 inhibition is alleviated by PLN phosphorylation. Also inhibits the activity of ATP2A3/SERCA3. Controls intracellular Ca(2+) levels in elongated spermatids and may play a role in germ cell differentiation. In the thalamic reticular nucleus of the brain, plays a role in the regulation of sleep patterns and executive functioning. This chain is Phospholamban, found in Canis lupus familiaris (Dog).